The chain runs to 22 residues: FIHHIFRGIVHAGRSIGRFLTG.

G22 carries the post-translational modification Glycine amide.

This sequence belongs to the pleurocidin family. In terms of tissue distribution, mast cells in gill, skin and gut, and in lining blood vessels in the viscera.

Its subcellular location is the secreted. The protein resides in the membrane. Its function is as follows. Antimicrobial peptide with broad-spectrum activity against Gram-positive and Gram-negative bacteria. Rapidly inactivates both channel catfish herpesvirus (ED(50)=11 uM) and frog virus 3 (ED(50)=16 uM) over a wide temperature range. Has hemolytic activity. This is Piscidin-3 from Morone chrysops x Morone saxatilis (White bass x Striped bass).